We begin with the raw amino-acid sequence, 548 residues long: Flagellin (548 aa).

The protein belongs to the bacterial flagellin family.

Its subcellular location is the secreted. The protein localises to the bacterial flagellum. Flagellin is the subunit protein which polymerizes to form the filaments of bacterial flagella. This chain is Flagellin (fliC), found in Escherichia coli O127:H6 (strain E2348/69 / EPEC).